The following is a 499-amino-acid chain: Endoglucanase (499 aa).

The N-terminal stretch at 1–29 is a signal peptide; sequence MKRSISIFITCLLIAVLTMGGLLPSPASA. Substrate contacts are provided by residues H65, 69-70, Y96, and H131; that span reads WY. The active-site Proton donor is E169. Substrate is bound at residue Y231. E257 acts as the Nucleophile in catalysis. Residues 263–264, W291, and 296–298 contribute to the substrate site; these read AS and KQE. A compositionally biased stretch (basic and acidic residues) spans 330–340; that stretch reads RGTKDSTKDVP. The tract at residues 330-353 is disordered; it reads RGTKDSTKDVPETPAQDNPTQEKG. The CBM3 domain maps to 350–499; the sequence is QEKGVSVQYK…GKLIWGTEPN (150 aa).

The protein belongs to the glycosyl hydrolase 5 (cellulase A) family.

The enzyme catalyses Endohydrolysis of (1-&gt;4)-beta-D-glucosidic linkages in cellulose, lichenin and cereal beta-D-glucans.. The chain is Endoglucanase (bglC) from Bacillus subtilis.